The following is a 431-amino-acid chain: Enolase (431 aa).

Substrate is bound by residues H157 and E166. The Proton donor role is filled by E209. 3 residues coordinate Mg(2+): D244, E293, and D318. Substrate is bound by residues E293 and D318. The active-site Proton acceptor is K343. Substrate-binding positions include 370–373 (SHRS) and K394.

This sequence belongs to the enolase family. As to quaternary structure, homodimer. It depends on Mg(2+) as a cofactor.

The protein resides in the cytoplasm. The catalysed reaction is (2R)-2-phosphoglycerate = phosphoenolpyruvate + H2O. Its pathway is carbohydrate degradation; glycolysis; pyruvate from D-glyceraldehyde 3-phosphate: step 4/5. The protein is Enolase (ENO) of Fasciola hepatica (Liver fluke).